The primary structure comprises 535 residues: Phosphoenolpyruvate carboxykinase (ATP) (535 aa).

Arginine 59, tyrosine 201, and lysine 207 together coordinate substrate. ATP is bound by residues lysine 207, histidine 226, and 243-251 (GLSGTGKTT). Mn(2+) contacts are provided by lysine 207 and histidine 226. Residue aspartate 264 participates in Mn(2+) binding. Residues glutamate 292, arginine 328, 444-445 (RI), and threonine 450 each bind ATP. Arginine 328 is a binding site for substrate.

It belongs to the phosphoenolpyruvate carboxykinase (ATP) family. It depends on Mn(2+) as a cofactor.

It localises to the cytoplasm. The catalysed reaction is oxaloacetate + ATP = phosphoenolpyruvate + ADP + CO2. It functions in the pathway carbohydrate biosynthesis; gluconeogenesis. Involved in the gluconeogenesis. Catalyzes the conversion of oxaloacetate (OAA) to phosphoenolpyruvate (PEP) through direct phosphoryl transfer between the nucleoside triphosphate and OAA. The protein is Phosphoenolpyruvate carboxykinase (ATP) of Bacteroides thetaiotaomicron (strain ATCC 29148 / DSM 2079 / JCM 5827 / CCUG 10774 / NCTC 10582 / VPI-5482 / E50).